The primary structure comprises 445 residues: Cytochrome b (445 aa).

Over 2–49 the chain is Cytoplasmic; the sequence is SGIPHDHYEPRTGIEKWLHSRLPIVALAYDTIMIPTPRNLNWMWIWGV. A helical membrane pass occupies residues 50–67; that stretch reads VLAFCLVLQIVTGIVLAM. Residues 68–94 lie on the Periplasmic side of the membrane; the sequence is HYTPHVDLAFASVEHIMRNVNGGFMLR. Residues 95 to 113 form a helical membrane-spanning segment; the sequence is YLHANGASLFFIAVYLHIF. Positions 97 and 111 each coordinate heme b. At 114–129 the chain is on the cytoplasmic side; it reads RGLYYGSYKAPREVTW. A helical membrane pass occupies residues 130–149; the sequence is IVGMLIYLAMMATAFMGYVL. The Periplasmic portion of the chain corresponds to 150 to 193; that stretch reads PWGQMSFWGATVITGLFGAIPGIGHSIQTWLLGGPAVDNATLNR. Residues 194-216 form a helical membrane-spanning segment; the sequence is FFSLHYLLPFVIAALVAIHIWAF. Residues His-198 and His-212 each coordinate heme b. Residues 217 to 252 lie on the Cytoplasmic side of the membrane; that stretch reads HSTGNNNPTGVEVRRTSKAEAQKDTVPFWPYFIIKD. The helical transmembrane segment at 253-270 threads the bilayer; it reads VFALAVVLLVFFAIVGFM. Residues 271–329 are Periplasmic-facing; it reads PNYLGHPDNYIEANPLSTPAHIVPEWYFLPFYAILRAFTADVWVVQIANFISFGIIDAK. The helical transmembrane segment at 330–346 threads the bilayer; that stretch reads FFGVLAMFGAILVMALV. Residues 347-364 lie on the Cytoplasmic side of the membrane; that stretch reads PWLDTSPVRSGRYRPMFK. The helical transmembrane segment at 365-382 threads the bilayer; the sequence is IYFWLLAADFVILTWVGA. The Periplasmic segment spans residues 383–388; sequence QQTTFP. A helical transmembrane segment spans residues 389–408; the sequence is YDWISLIASAYWFAYFLVIL. Residues 409–445 are Cytoplasmic-facing; the sequence is PILGAIEKPVAPPATIEEDFNAHYSPATGGTKTVVAE.

Belongs to the cytochrome b family. The main subunits of complex b-c1 are: cytochrome b, cytochrome c1 and the Rieske protein. Heme b is required as a cofactor.

The protein resides in the cell membrane. Functionally, component of the ubiquinol-cytochrome c reductase complex (complex III or cytochrome b-c1 complex), which is a respiratory chain that generates an electrochemical potential coupled to ATP synthesis. In Cereibacter sphaeroides (Rhodobacter sphaeroides), this protein is Cytochrome b (petB).